Reading from the N-terminus, the 57-residue chain is Large ribosomal subunit protein bL32 (57 aa).

Belongs to the bacterial ribosomal protein bL32 family.

The chain is Large ribosomal subunit protein bL32 from Staphylococcus epidermidis (strain ATCC 35984 / DSM 28319 / BCRC 17069 / CCUG 31568 / BM 3577 / RP62A).